The sequence spans 1145 residues: Nucleolar protein 6 (1145 aa).

Residues 1-46 are disordered; that stretch reads MQKKRNRAGPPQQEAASDDGEMSDSSDKMEVAQGKGKSAVKRAPDA.

It belongs to the NRAP family. Part of the small subunit (SSU) processome, composed of more than 70 proteins and the RNA chaperone small nucleolar RNA (snoRNA) U3.

It localises to the nucleus. The protein resides in the nucleolus. The protein localises to the chromosome. Its function is as follows. Part of the small subunit (SSU) processome, first precursor of the small eukaryotic ribosomal subunit. During the assembly of the SSU processome in the nucleolus, many ribosome biogenesis factors, an RNA chaperone and ribosomal proteins associate with the nascent pre-rRNA and work in concert to generate RNA folding, modifications, rearrangements and cleavage as well as targeted degradation of pre-ribosomal RNA by the RNA exosome. This chain is Nucleolar protein 6 (nol6), found in Xenopus tropicalis (Western clawed frog).